Here is a 577-residue protein sequence, read N- to C-terminus: Sensory neuron membrane protein 2 (577 aa).

The Cytoplasmic portion of the chain corresponds to 1 to 6 (MVQCTL). A helical membrane pass occupies residues 7–27 (IWAGIGAMMAVSGALLGWVVF). The Extracellular portion of the chain corresponds to 28-519 (PRAVHEKVIE…LMKVLSLLDV (492 aa)). N-linked (GlcNAc...) asparagine glycosylation is found at Asn-66, Asn-161, Asn-271, and Asn-307. 3 cysteine pairs are disulfide-bonded: Cys-316–Cys-384, Cys-345–Cys-411, and Cys-386–Cys-400. The chain crosses the membrane as a helical span at residues 520-540 (VQWVLIGVGLLLAVLMPTVYF). The Cytoplasmic portion of the chain corresponds to 541–577 (VKRCRGEGSRTVSPAVTATTSAASLSTVAGVTGDRSK).

It belongs to the CD36 family.

It is found in the cell membrane. Plays an olfactory role that is not restricted to pheromone sensitivity. The polypeptide is Sensory neuron membrane protein 2 (Anopheles gambiae (African malaria mosquito)).